The following is a 268-amino-acid chain: 3-methyl-2-oxobutanoate hydroxymethyltransferase (268 aa).

The Mg(2+) site is built by D44 and D83. 3-methyl-2-oxobutanoate contacts are provided by residues 44-45 (DS), D83, and K113. Mg(2+) is bound at residue E115. E182 acts as the Proton acceptor in catalysis.

Belongs to the PanB family. As to quaternary structure, homodecamer; pentamer of dimers. Mg(2+) serves as cofactor.

Its subcellular location is the cytoplasm. It catalyses the reaction 3-methyl-2-oxobutanoate + (6R)-5,10-methylene-5,6,7,8-tetrahydrofolate + H2O = 2-dehydropantoate + (6S)-5,6,7,8-tetrahydrofolate. It participates in cofactor biosynthesis; (R)-pantothenate biosynthesis; (R)-pantoate from 3-methyl-2-oxobutanoate: step 1/2. Catalyzes the reversible reaction in which hydroxymethyl group from 5,10-methylenetetrahydrofolate is transferred onto alpha-ketoisovalerate to form ketopantoate. The chain is 3-methyl-2-oxobutanoate hydroxymethyltransferase from Synechococcus elongatus (strain ATCC 33912 / PCC 7942 / FACHB-805) (Anacystis nidulans R2).